We begin with the raw amino-acid sequence, 217 residues long: 3-isopropylmalate dehydratase small subunit (217 aa).

The protein belongs to the LeuD family. LeuD type 1 subfamily. In terms of assembly, heterodimer of LeuC and LeuD.

The catalysed reaction is (2R,3S)-3-isopropylmalate = (2S)-2-isopropylmalate. Its pathway is amino-acid biosynthesis; L-leucine biosynthesis; L-leucine from 3-methyl-2-oxobutanoate: step 2/4. Its function is as follows. Catalyzes the isomerization between 2-isopropylmalate and 3-isopropylmalate, via the formation of 2-isopropylmaleate. This is 3-isopropylmalate dehydratase small subunit from Paraburkholderia phymatum (strain DSM 17167 / CIP 108236 / LMG 21445 / STM815) (Burkholderia phymatum).